The chain runs to 341 residues: Anthranilate phosphoribosyltransferase (341 aa).

5-phospho-alpha-D-ribose 1-diphosphate-binding positions include Gly79, 82 to 83 (GD), Thr87, 89 to 92 (NIST), 107 to 115 (KHGNRAVSS), and Ser119. An anthranilate-binding site is contributed by Gly79. Ser91 contributes to the Mg(2+) binding site. Residue Asn110 coordinates anthranilate. Arg165 is a binding site for anthranilate. Residues Asp224 and Glu225 each coordinate Mg(2+).

This sequence belongs to the anthranilate phosphoribosyltransferase family. As to quaternary structure, homodimer. Requires Mg(2+) as cofactor.

It catalyses the reaction N-(5-phospho-beta-D-ribosyl)anthranilate + diphosphate = 5-phospho-alpha-D-ribose 1-diphosphate + anthranilate. It participates in amino-acid biosynthesis; L-tryptophan biosynthesis; L-tryptophan from chorismate: step 2/5. In terms of biological role, catalyzes the transfer of the phosphoribosyl group of 5-phosphorylribose-1-pyrophosphate (PRPP) to anthranilate to yield N-(5'-phosphoribosyl)-anthranilate (PRA). The sequence is that of Anthranilate phosphoribosyltransferase from Bacillus cereus (strain B4264).